A 308-amino-acid polypeptide reads, in one-letter code: Elongation factor Ts (308 aa).

The interval 80 to 83 is involved in Mg(2+) ion dislocation from EF-Tu; it reads TDFV.

Belongs to the EF-Ts family.

It is found in the cytoplasm. Its function is as follows. Associates with the EF-Tu.GDP complex and induces the exchange of GDP to GTP. It remains bound to the aminoacyl-tRNA.EF-Tu.GTP complex up to the GTP hydrolysis stage on the ribosome. The sequence is that of Elongation factor Ts from Allorhizobium ampelinum (strain ATCC BAA-846 / DSM 112012 / S4) (Agrobacterium vitis (strain S4)).